A 247-amino-acid chain; its full sequence is Acyl-coenzyme A thioesterase THEM5 (247 aa).

The Proton donor/acceptor role is filled by Asp-167.

This sequence belongs to the THEM4/THEM5 thioesterase family. Homodimer.

It localises to the mitochondrion matrix. The enzyme catalyses hexadecanoyl-CoA + H2O = hexadecanoate + CoA + H(+). It catalyses the reaction (9Z,12Z)-octadecadienoyl-CoA + H2O = (9Z,12Z)-octadecadienoate + CoA + H(+). It carries out the reaction tetradecanoyl-CoA + H2O = tetradecanoate + CoA + H(+). The catalysed reaction is (9Z)-octadecenoyl-CoA + H2O = (9Z)-octadecenoate + CoA + H(+). The enzyme catalyses (9Z)-hexadecenoyl-CoA + H2O = (9Z)-hexadecenoate + CoA + H(+). It catalyses the reaction (5Z,8Z,11Z,14Z)-eicosatetraenoyl-CoA + H2O = (5Z,8Z,11Z,14Z)-eicosatetraenoate + CoA + H(+). It carries out the reaction octadecanoyl-CoA + H2O = octadecanoate + CoA + H(+). Has acyl-CoA thioesterase activity towards long-chain (C16 and C18) fatty acyl-CoA substrates, with a preference for linoleoyl-CoA and other unsaturated long-chain fatty acid-CoA esters. Plays an important role in mitochondrial fatty acid metabolism, and in remodeling of the mitochondrial lipid cardiolipin. Required for normal mitochondrial function. This Homo sapiens (Human) protein is Acyl-coenzyme A thioesterase THEM5 (THEM5).